The primary structure comprises 499 residues: Spore germination protein GerQA (499 aa).

3 helical membrane passes run 285 to 305 (LFAF…LTYH), 376 to 396 (SNVL…APIY), and 409 to 429 (FIIS…SLLL).

The protein belongs to the GerABKA family.

It localises to the membrane. Required for the germination response to inosine. Has no role in L-alanine germination. This is Spore germination protein GerQA (gerQA) from Bacillus cereus.